Consider the following 81-residue polypeptide: Sec-independent protein translocase protein TatA (81 aa).

A helical membrane pass occupies residues Met1–Gly21. Positions Gly34–Ala81 are disordered. Composition is skewed to basic and acidic residues over residues Asp47–Gln59 and Lys70–Ala81.

Belongs to the TatA/E family. As to quaternary structure, the Tat system comprises two distinct complexes: a TatABC complex, containing multiple copies of TatA, TatB and TatC subunits, and a separate TatA complex, containing only TatA subunits. Substrates initially bind to the TatABC complex, which probably triggers association of the separate TatA complex to form the active translocon.

Its subcellular location is the cell inner membrane. Part of the twin-arginine translocation (Tat) system that transports large folded proteins containing a characteristic twin-arginine motif in their signal peptide across membranes. TatA could form the protein-conducting channel of the Tat system. The chain is Sec-independent protein translocase protein TatA from Shewanella frigidimarina (strain NCIMB 400).